The sequence spans 217 residues: MVAWRWACLICLAFSLTTLVQRGSGDTGGFRLEDAVEGTSSVKQRWDHVTTTTRRPGATRAPAKPAGPPAEDDFNLADALDDQNDRDHDRKKPSIGGGGFSDKDLEDIVGGGDYKPDKGKGGGQYGGGDNSDDSGMSAETGTIAGVASALAMALIGAVSSYISYQQKKFCFSIQQGLNADYVKGENLEAVVCEEPQVKYSALQTQSTEPPPPEPPRI.

The signal sequence occupies residues 1 to 25; the sequence is MVAWRWACLICLAFSLTTLVQRGSG. The Extracellular portion of the chain corresponds to 26-141; the sequence is DTGGFRLEDA…DDSGMSAETG (116 aa). The interval 36 to 136 is disordered; that stretch reads VEGTSSVKQR…GGDNSDDSGM (101 aa). The segment covering 50 to 64 has biased composition (low complexity); it reads TTTTRRPGATRAPAK. Over residues 70–82 the composition is skewed to acidic residues; it reads AEDDFNLADALDD. Over residues 83 to 92 the composition is skewed to basic and acidic residues; it reads QNDRDHDRKK. A glycan (O-linked (Xyl...) (chondroitin sulfate) serine) is linked at Ser-134. A helical membrane pass occupies residues 142–162; it reads TIAGVASALAMALIGAVSSYI. The Cytoplasmic portion of the chain corresponds to 163–217; the sequence is SYQQKKFCFSIQQGLNADYVKGENLEAVVCEEPQVKYSALQTQSTEPPPPEPPRI.

This sequence belongs to the CD99 family. In terms of processing, O-glycosylated.

Its subcellular location is the cell membrane. The protein resides in the cell junction. It localises to the secreted. In terms of biological role, plays a role in a late step of leukocyte extravasation helping cells to overcome the endothelial basement membrane. Acts at the same site as, but independently of, PECAM1. Homophilic adhesion molecule, but these interactions may not be required for cell aggregation. This Bos taurus (Bovine) protein is CD99 antigen-like protein 2 (CD99L2).